We begin with the raw amino-acid sequence, 347 residues long: L-threonine 3-dehydrogenase (347 aa).

Cys43 serves as a coordination point for Zn(2+). Active-site charge relay system residues include Thr45 and His48. Positions 68, 69, 98, 101, 104, and 112 each coordinate Zn(2+). Residues Ile180, Asp200, Arg205, 267–269 (LSL), and 292–293 (IT) contribute to the NAD(+) site.

It belongs to the zinc-containing alcohol dehydrogenase family. In terms of assembly, homotetramer. Zn(2+) serves as cofactor.

The protein resides in the cytoplasm. The enzyme catalyses L-threonine + NAD(+) = (2S)-2-amino-3-oxobutanoate + NADH + H(+). Its pathway is amino-acid degradation; L-threonine degradation via oxydo-reductase pathway; glycine from L-threonine: step 1/2. Its function is as follows. Catalyzes the NAD(+)-dependent oxidation of L-threonine to 2-amino-3-ketobutyrate. The protein is L-threonine 3-dehydrogenase of Bacillus subtilis (strain 168).